The primary structure comprises 156 residues: Endoribonuclease YbeY (156 aa).

3 residues coordinate Zn(2+): His-122, His-126, and His-132.

The protein belongs to the endoribonuclease YbeY family. Zn(2+) serves as cofactor.

It localises to the cytoplasm. Its function is as follows. Single strand-specific metallo-endoribonuclease involved in late-stage 70S ribosome quality control and in maturation of the 3' terminus of the 16S rRNA. This is Endoribonuclease YbeY from Moorella thermoacetica (strain ATCC 39073 / JCM 9320).